The chain runs to 493 residues: Solute carrier family 2, facilitated glucose transporter member 3 (493 aa).

At 1-10 (MGTAKVTPSL) the chain is on the cytoplasmic side. The chain crosses the membrane as a helical span at residues 11 to 32 (VFAVTVATIGSFQFGYNTGVIN). The Extracellular segment spans residues 33 to 64 (APETIIKDFLNYTLEERLEDLPREGLLTTLWS). N43 is a glycosylation site (N-linked (GlcNAc...) asparagine). Residues 65-85 (LCVAIFSVGGMIGSFSVGLFV) form a helical membrane-spanning segment. Topologically, residues 86–90 (NRFGR) are cytoplasmic. The chain crosses the membrane as a helical span at residues 91-111 (RNSMLLVNLIAILGGCLMGFA). At 112–118 (KIAESVE) the chain is on the extracellular side. The chain crosses the membrane as a helical span at residues 119 to 142 (MLILGRLIIGIFCGLCTGFVPMYI). The Cytoplasmic segment spans residues 143 to 153 (GEVSPTALRGA). A helical transmembrane segment spans residues 154 to 174 (FGTLNQLGIVVGILVAQVFGL). Q159 contributes to the D-glucose binding site. Residues 175–183 (DFILGSEEL) lie on the Extracellular side of the membrane. Residues 184–204 (WPGLLGLTIIPAILQSAALPF) traverse the membrane as a helical segment. Topologically, residues 205 to 269 (CPESPRFLLI…LFKSPSYFQP (65 aa)) are cytoplasmic. At T232 the chain carries Phosphothreonine. Residues 270–290 (LLISVVLQLSQQFSGINAVFY) form a helical membrane-spanning segment. The interval 277 to 279 (QLS) is important for selectivity against fructose. D-glucose contacts are provided by residues 280–281 (QQ) and N286. Over 291-304 (YSTGIFQDAGVQEP) the chain is Extracellular. A helical membrane pass occupies residues 305-325 (IYATIGAGVVNTIFTVVSLFL). N315 contacts D-glucose. Residues 326-331 (VERAGR) lie on the Cytoplasmic side of the membrane. The chain crosses the membrane as a helical span at residues 332–352 (RTLHMIGLGGMAVCSVFMTIS). Residues 353–363 (LLLKDEYEAMS) lie on the Extracellular side of the membrane. A helical transmembrane segment spans residues 364-389 (FVCIVAILVYVAFFEIGPGPIPWFIV). Residues E378 and W386 each coordinate D-glucose. The Cytoplasmic portion of the chain corresponds to 390-399 (AELFSQGPRP). Residues 400–420 (AAMAVAGCSNWTSNFLVGMFF) form a helical membrane-spanning segment. Residues 421-429 (PSAAAYLGA) are Extracellular-facing. A helical membrane pass occupies residues 430 to 450 (YVFIIFAAFLVFFLIFTSFKV). Residues 451-493 (PETKGRTFEDITRAFEGQAHSGKGSAGVELNSMQPVKETPGNA) are Cytoplasmic-facing. Phosphoserine is present on residues S471, S475, and S482. Position 489 is a phosphothreonine (T489).

The protein belongs to the major facilitator superfamily. Sugar transporter (TC 2.A.1.1) family. Glucose transporter subfamily. As to quaternary structure, interacts with SMIM43; the interaction may promote SLC2A3-mediated glucose transport to meet the energy needs of mesendoderm differentiation. As to expression, brain and osteoblastic cells (at protein level). Highly expressed in brain.

Its subcellular location is the cell membrane. The protein localises to the perikaryon. It is found in the cell projection. The catalysed reaction is D-glucose(out) = D-glucose(in). The enzyme catalyses D-galactose(in) = D-galactose(out). Its activity is regulated as follows. Deoxyglucose transport is inhibited by D-glucose, D-galactose and maltose. Galactose transport is inhibited by D-glucose and maltose. Its function is as follows. Facilitative glucose transporter. Can also mediate the uptake of various other monosaccharides across the cell membrane. Mediates the uptake of glucose, 2-deoxyglucose, galactose, mannose, xylose and fucose, and probably also dehydroascorbate. Does not mediate fructose transport. Required for mesendoderm differentiation. This Rattus norvegicus (Rat) protein is Solute carrier family 2, facilitated glucose transporter member 3.